The sequence spans 227 residues: Cytochrome c oxidase subunit 2 (227 aa).

At Met-1–Ser-14 the chain is on the mitochondrial intermembrane side. Residues Pro-15–Met-45 form a helical membrane-spanning segment. Over Leu-46–Gln-59 the chain is Mitochondrial matrix. Residues Glu-60–Met-87 form a helical membrane-spanning segment. Topologically, residues Asp-88 to Ile-227 are mitochondrial intermembrane. His-161, Cys-196, Glu-198, Cys-200, His-204, and Met-207 together coordinate Cu cation. Mg(2+) is bound at residue Glu-198. The residue at position 218 (Tyr-218) is a Phosphotyrosine.

Belongs to the cytochrome c oxidase subunit 2 family. As to quaternary structure, component of the cytochrome c oxidase (complex IV, CIV), a multisubunit enzyme composed of 14 subunits. The complex is composed of a catalytic core of 3 subunits MT-CO1, MT-CO2 and MT-CO3, encoded in the mitochondrial DNA, and 11 supernumerary subunits COX4I, COX5A, COX5B, COX6A, COX6B, COX6C, COX7A, COX7B, COX7C, COX8 and NDUFA4, which are encoded in the nuclear genome. The complex exists as a monomer or a dimer and forms supercomplexes (SCs) in the inner mitochondrial membrane with NADH-ubiquinone oxidoreductase (complex I, CI) and ubiquinol-cytochrome c oxidoreductase (cytochrome b-c1 complex, complex III, CIII), resulting in different assemblies (supercomplex SCI(1)III(2)IV(1) and megacomplex MCI(2)III(2)IV(2)). Found in a complex with TMEM177, COA6, COX18, COX20, SCO1 and SCO2. Interacts with TMEM177 in a COX20-dependent manner. Interacts with COX20. Interacts with COX16. Requires Cu cation as cofactor.

It is found in the mitochondrion inner membrane. The catalysed reaction is 4 Fe(II)-[cytochrome c] + O2 + 8 H(+)(in) = 4 Fe(III)-[cytochrome c] + 2 H2O + 4 H(+)(out). In terms of biological role, component of the cytochrome c oxidase, the last enzyme in the mitochondrial electron transport chain which drives oxidative phosphorylation. The respiratory chain contains 3 multisubunit complexes succinate dehydrogenase (complex II, CII), ubiquinol-cytochrome c oxidoreductase (cytochrome b-c1 complex, complex III, CIII) and cytochrome c oxidase (complex IV, CIV), that cooperate to transfer electrons derived from NADH and succinate to molecular oxygen, creating an electrochemical gradient over the inner membrane that drives transmembrane transport and the ATP synthase. Cytochrome c oxidase is the component of the respiratory chain that catalyzes the reduction of oxygen to water. Electrons originating from reduced cytochrome c in the intermembrane space (IMS) are transferred via the dinuclear copper A center (CU(A)) of subunit 2 and heme A of subunit 1 to the active site in subunit 1, a binuclear center (BNC) formed by heme A3 and copper B (CU(B)). The BNC reduces molecular oxygen to 2 water molecules using 4 electrons from cytochrome c in the IMS and 4 protons from the mitochondrial matrix. This is Cytochrome c oxidase subunit 2 (MT-CO2) from Rhabdomys pumilio (Four-striped grass mouse).